Here is a 494-residue protein sequence, read N- to C-terminus: Neuronal acetylcholine receptor subunit alpha-6 (494 aa).

A signal peptide spans 1 to 25; it reads MLTSKGQGFLHGGLCLWLCVFTPFF. The Extracellular portion of the chain corresponds to 26–239; that stretch reads KGCVGCATEE…ITYSFYIRRL (214 aa). N-linked (GlcNAc...) asparagine glycans are attached at residues Asn-54 and Asn-171. Cystine bridges form between Cys-158/Cys-172 and Cys-222/Cys-223. Transmembrane regions (helical) follow at residues 240 to 264, 272 to 290, and 306 to 327; these read PMFY…VFYL, VTLC…LVIT, and YLLF…VLNI. At 328-465 the chain is on the cytoplasmic side; sequence HYRTPTTHTM…WKYVAMVVDR (138 aa). Ser-401 carries the post-translational modification Phosphoserine. The chain crosses the membrane as a helical span at residues 466–484; the sequence is VFLWVFIIVCVFGTAGLFL.

The protein belongs to the ligand-gated ion channel (TC 1.A.9) family. Acetylcholine receptor (TC 1.A.9.1) subfamily. Alpha-6/CHRNA6 sub-subfamily. In terms of assembly, neuronal AChR is composed of two different types of subunits: alpha and non-alpha (beta). CHRNA6/alpha-6 subunit can be combined to CHRNB2/beta-2, CHRNA4/alpha-4 and CHRNB3/beta-3 to give rise to functional receptors. Heteropentamers containing CHRNB3 have an stoichiometry of (CHRNA6:CHRNB2)2:CHRNB3. Interacts with LYPD6.

The protein resides in the synaptic cell membrane. The enzyme catalyses Ca(2+)(in) = Ca(2+)(out). The catalysed reaction is K(+)(in) = K(+)(out). It carries out the reaction Na(+)(in) = Na(+)(out). Its activity is regulated as follows. Activated by a myriad of ligands such as acetylcholine, cytisine and nicotine. CHRNA6 nAChR activity is inhibited by the antagonists alpha-conotoxin MII and PIA, a small disulfide-constrained peptides from cone snails. In terms of biological role, component of neuronal acetylcholine receptors (nAChRs) that function as pentameric, ligand-gated cation channels with high calcium permeability among other activities. nAChRs are excitatory neurotrasnmitter receptors formed by a collection of nAChR subunits known to mediate synaptic transmission in the nervous system and the neuromuscular junction. Each nAchR subunit confers differential attributes to channel properties, including activation, deactivation and desensitization kinetics, pH sensitivity, cation permeability, and binding to allosteric modulators. CHRNA6 forms pentameric channels with CHRNB2, CHRNB3 and CHRNA4 that exhibit high sensitivity to ACh and nicotine and are predominantly expressed in only a few brain areas, including dopaminergic neurons, norepirephrine neurons and cells of the visual system. nAChrs containing CHRNA6 subunits mediate endogenous cholinergic modulation of dopamine and gamma-aminobutyric acid (GABA) release in response to nicotine at nerve terminals. This chain is Neuronal acetylcholine receptor subunit alpha-6, found in Homo sapiens (Human).